Here is a 134-residue protein sequence, read N- to C-terminus: B3 domain-containing protein At1g16640 (134 aa).

The TF-B3 DNA-binding region spans 7–100; sequence VQFMKPFISE…TFYVIIYGHN (94 aa).

The protein resides in the nucleus. The sequence is that of B3 domain-containing protein At1g16640 from Arabidopsis thaliana (Mouse-ear cress).